A 629-amino-acid chain; its full sequence is Mitochondrial Rho GTPase 1 (629 aa).

Topologically, residues methionine 1 to arginine 600 are cytoplasmic. The Miro 1 domain maps to serine 2–histidine 170. Residues glycine 11–serine 18, aspartate 59–arginine 63, and asparagine 115–aspartate 118 each bind GTP. EF-hand domains lie at alanine 186 to lysine 221 and alanine 306 to leucine 341. Aspartate 199, aspartate 201, aspartate 203, tyrosine 205, glutamate 210, aspartate 319, aspartate 321, aspartate 323, and glutamate 330 together coordinate Ca(2+). The 165-residue stretch at arginine 421 to asparagine 585 folds into the Miro 2 domain. Residues glycine 430–serine 437, glutamate 466–glycine 470, and leucine 535–aspartate 538 each bind GTP. Residues alanine 601–tryptophan 621 form a helical; Anchor for type IV membrane protein membrane-spanning segment. The Mitochondrial intermembrane segment spans residues arginine 622–alanine 629.

It belongs to the mitochondrial Rho GTPase family.

It localises to the mitochondrion outer membrane. In terms of biological role, mitochondrial GTPase involved in mitochondrial trafficking. Probably involved in control of anterograde transport of mitochondria and their subcellular distribution. This Neurospora crassa (strain ATCC 24698 / 74-OR23-1A / CBS 708.71 / DSM 1257 / FGSC 987) protein is Mitochondrial Rho GTPase 1 (gem-1).